Here is a 133-residue protein sequence, read N- to C-terminus: uncharacterized protein (133 aa).

This is an uncharacterized protein from Mycobacterium tuberculosis (strain CDC 1551 / Oshkosh).